Consider the following 119-residue polypeptide: Phytosulfokines 2 (119 aa).

The N-terminal stretch at 1-34 (MSTTRGVSSSSAAAALALLLLFALCFFSFHFAAA) is a signal peptide. A propeptide spanning residues 35–109 (ARAVPRDEHQ…RRLLSDAHLD (75 aa)) is cleaved from the precursor. Sulfotyrosine occurs at positions 110 and 112. A propeptide spanning residues 115–119 (HKNKP) is cleaved from the precursor.

Belongs to the phytosulfokine family. Sulfation is important for activity and for the binding to a putative membrane receptor. Post-translationally, PSK-alpha is produced by endopeptidase digestion. PSK-beta is produced from PSK-alpha by exopeptidase digestion.

It is found in the secreted. Its function is as follows. Promotes plant cell differentiation, organogenesis and somatic embryogenesis as well as cell proliferation. The chain is Phytosulfokines 2 (PSK2) from Oryza sativa subsp. japonica (Rice).